The primary structure comprises 266 residues: Tryptophan synthase alpha chain (266 aa).

Catalysis depends on proton acceptor residues E50 and D61.

The protein belongs to the TrpA family. In terms of assembly, tetramer of two alpha and two beta chains.

It catalyses the reaction (1S,2R)-1-C-(indol-3-yl)glycerol 3-phosphate + L-serine = D-glyceraldehyde 3-phosphate + L-tryptophan + H2O. It functions in the pathway amino-acid biosynthesis; L-tryptophan biosynthesis; L-tryptophan from chorismate: step 5/5. In terms of biological role, the alpha subunit is responsible for the aldol cleavage of indoleglycerol phosphate to indole and glyceraldehyde 3-phosphate. This chain is Tryptophan synthase alpha chain, found in Alkaliphilus metalliredigens (strain QYMF).